We begin with the raw amino-acid sequence, 139 residues long: Large ribosomal subunit protein uL16 (139 aa).

It belongs to the universal ribosomal protein uL16 family. As to quaternary structure, part of the 50S ribosomal subunit.

Binds 23S rRNA and is also seen to make contacts with the A and possibly P site tRNAs. The protein is Large ribosomal subunit protein uL16 of Chlorobium phaeobacteroides (strain BS1).